Consider the following 272-residue polypeptide: Ribosomal RNA small subunit methyltransferase J (272 aa).

S-adenosyl-L-methionine-binding positions include 120–121 (RD), 136–137 (ER), 171–172 (SS), and Asp-188.

This sequence belongs to the methyltransferase superfamily. RsmJ family.

The protein localises to the cytoplasm. It catalyses the reaction guanosine(1516) in 16S rRNA + S-adenosyl-L-methionine = N(2)-methylguanosine(1516) in 16S rRNA + S-adenosyl-L-homocysteine + H(+). Its function is as follows. Specifically methylates the guanosine in position 1516 of 16S rRNA. The sequence is that of Ribosomal RNA small subunit methyltransferase J from Colwellia psychrerythraea (strain 34H / ATCC BAA-681) (Vibrio psychroerythus).